We begin with the raw amino-acid sequence, 438 residues long: MLRTHYSNEITEELNGKRVKVAGWVQEVKDLGGIKFIWIRDREGIVQVTAPKKKVSQEIFKLIPKLNSEDVIVVEGIVNFTPKAKLGFEVIPEKLEVISRAKTPLPLDPTGKVKAELDTRLDNRFMDLRNPKVMAIFKIRSSVFRAVREFFYSEGFIEIHTPKIIATATEGGTELFPLKYFERDAFLAQSPQLYKQMMMATGLDKVFEIAPIFRAEEHNTTRHLNEAWSIDAEMAFIENEGEVMDLLERLISYVINYVREHNEKELKTLEFELNEPKRPFPRITYDKALEILSDLGKEIPWGEDIDTEGEKLLGKYMAENEGADLYFIYRYPSEAKPFYIMKYDEKPEVCRAFDLEYRGVEISSGGQREHRHDVLLEQIKEKGLNPKSFEFYLKAFEYGMPPHGGFGLGAERLIMRMLDIGNIREVILFPRDRRRLVP.

Residue glutamate 170 coordinates L-aspartate. An aspartate region spans residues 192–195 (QLYK). Arginine 214 is an L-aspartate binding site. ATP contacts are provided by residues 214 to 216 (RAE), 222 to 224 (RHL), and glutamate 361. 2 residues coordinate Mg(2+): glutamate 361 and serine 364. L-aspartate contacts are provided by serine 364 and arginine 368. 409–412 (GAER) serves as a coordination point for ATP.

The protein belongs to the class-II aminoacyl-tRNA synthetase family. Type 2 subfamily. In terms of assembly, homodimer. It depends on Mg(2+) as a cofactor.

The protein resides in the cytoplasm. The catalysed reaction is tRNA(Asp) + L-aspartate + ATP = L-aspartyl-tRNA(Asp) + AMP + diphosphate. Its function is as follows. Catalyzes the attachment of L-aspartate to tRNA(Asp) in a two-step reaction: L-aspartate is first activated by ATP to form Asp-AMP and then transferred to the acceptor end of tRNA(Asp). The chain is Aspartate--tRNA(Asp) ligase from Pyrococcus horikoshii (strain ATCC 700860 / DSM 12428 / JCM 9974 / NBRC 100139 / OT-3).